The chain runs to 87 residues: Small ribosomal subunit protein uS17 (87 aa).

Belongs to the universal ribosomal protein uS17 family. As to quaternary structure, part of the 30S ribosomal subunit.

Its function is as follows. One of the primary rRNA binding proteins, it binds specifically to the 5'-end of 16S ribosomal RNA. In Cytophaga hutchinsonii (strain ATCC 33406 / DSM 1761 / CIP 103989 / NBRC 15051 / NCIMB 9469 / D465), this protein is Small ribosomal subunit protein uS17.